Reading from the N-terminus, the 312-residue chain is Putative tricarboxylate transport protein, mitochondrial (312 aa).

Solcar repeat units lie at residues 23-111 (EKTV…LKSQ), 122-208 (VMRL…LKDW), and 218-303 (ISKP…IIEF). The next 6 helical transmembrane spans lie at 29–49 (IVIGGITGGIEICITFPTEYV), 75–95 (VNGHGFFGLYRGLSVLLYGSI), 126–146 (LCGLGAGLSEAVFAVTPMETV), 164–184 (FVHGVGCIVKAEGLGGIYKGV), 221–241 (PIVGLMGAVAGAASVYGNTPI), and 286–306 (VCLDVGITFMIYDSIIEFLDV).

Belongs to the mitochondrial carrier (TC 2.A.29) family.

It localises to the mitochondrion inner membrane. In terms of biological role, transport of citrate across inner mitochondrial membrane. The sequence is that of Putative tricarboxylate transport protein, mitochondrial from Caenorhabditis elegans.